A 372-amino-acid chain; its full sequence is Flagellar P-ring protein (372 aa).

Positions 1-26 are cleaved as a signal peptide; that stretch reads MNLSSLPHRLLAAAVALCAIAAPASA.

The protein belongs to the FlgI family. The basal body constitutes a major portion of the flagellar organelle and consists of four rings (L,P,S, and M) mounted on a central rod.

The protein resides in the periplasm. Its subcellular location is the bacterial flagellum basal body. Assembles around the rod to form the L-ring and probably protects the motor/basal body from shearing forces during rotation. This chain is Flagellar P-ring protein, found in Xanthomonas campestris pv. campestris (strain ATCC 33913 / DSM 3586 / NCPPB 528 / LMG 568 / P 25).